The chain runs to 102 residues: Small ribosomal subunit protein uS10 (102 aa).

It belongs to the universal ribosomal protein uS10 family. In terms of assembly, part of the 30S ribosomal subunit.

Involved in the binding of tRNA to the ribosomes. This is Small ribosomal subunit protein uS10 from Exiguobacterium sibiricum (strain DSM 17290 / CCUG 55495 / CIP 109462 / JCM 13490 / 255-15).